Consider the following 350-residue polypeptide: Neutral protease 2 homolog SNOG_10522 (350 aa).

The N-terminal stretch at 1–18 (MKVSSQLAVAALASFATA) is a signal peptide. Residues 19–180 (ASVDVHKRET…AKALNKRTAI (162 aa)) constitute a propeptide that is removed on maturation. Intrachain disulfides connect C184–C251 and C258–C276. Residue H301 participates in Zn(2+) binding. The active site involves E302. H305 and D316 together coordinate Zn(2+).

This sequence belongs to the peptidase M35 family. Zn(2+) is required as a cofactor.

It is found in the secreted. It carries out the reaction Preferential cleavage of bonds with hydrophobic residues in P1'. Also 3-Asn-|-Gln-4 and 8-Gly-|-Ser-9 bonds in insulin B chain.. Its function is as follows. Secreted metalloproteinase that allows assimilation of proteinaceous substrates. Shows high activities on basic nuclear substrates such as histone and protamine. This is Neutral protease 2 homolog SNOG_10522 from Phaeosphaeria nodorum (strain SN15 / ATCC MYA-4574 / FGSC 10173) (Glume blotch fungus).